A 78-amino-acid polypeptide reads, in one-letter code: TP53-regulated inhibitor of apoptosis 1-A (78 aa).

The stretch at 1–52 (MNSVGEECTDMKRDYDQCFNRWFAEKFLKGAGSGDPCTELFRRYRECVQKAI) forms a coiled coil. The region spanning 5–55 (GEECTDMKRDYDQCFNRWFAEKFLKGAGSGDPCTELFRRYRECVQKAIKDK) is the CHCH domain. 2 consecutive short sequence motifs (cx9C motif) follow at residues 8–18 (CTDMKRDYDQC) and 37–47 (CTELFRRYREC). Intrachain disulfides connect Cys-8–Cys-47 and Cys-18–Cys-37.

Belongs to the TRIAP1/MDM35 family. As to quaternary structure, monomer. Forms a complex with prelid1 in the mitochondrion intermembrane space. Interacts with prelid3a.

It localises to the mitochondrion. The protein resides in the mitochondrion intermembrane space. It catalyses the reaction a 1,2-diacyl-sn-glycero-3-phosphate(in) = a 1,2-diacyl-sn-glycero-3-phosphate(out). Its function is as follows. Involved in the modulation of the mitochondrial apoptotic pathway by ensuring the accumulation of cardiolipin (CL) in mitochondrial membranes. The triap1:prelid1 complex probably functions as a phosphatidic acid (PA) transporter across the mitochondrion intermembrane space to provide PA for cardiolipin CL synthesis in the inner membrane. Likewise, the triap1:prelid3a complex mediates the transfer of phosphatidic acid (PA) between liposomes (in vitro) and probably functions as a PA transporter across the mitochondrion intermembrane space (in vivo). Mediates cell survival by inhibiting activation of caspase-9 which prevents induction of apoptosis. Required for pronephros development; probably involved at an early stage in the formation of pronephric components derived from the somatic layer. This is TP53-regulated inhibitor of apoptosis 1-A (triap1-a) from Xenopus laevis (African clawed frog).